A 121-amino-acid chain; its full sequence is Large ribosomal subunit protein bL20 (121 aa).

The protein belongs to the bacterial ribosomal protein bL20 family.

In terms of biological role, binds directly to 23S ribosomal RNA and is necessary for the in vitro assembly process of the 50S ribosomal subunit. It is not involved in the protein synthesizing functions of that subunit. The sequence is that of Large ribosomal subunit protein bL20 from Persephonella marina (strain DSM 14350 / EX-H1).